Reading from the N-terminus, the 1347-residue chain is Serine-aspartate repeat-containing protein D (1347 aa).

A signal peptide spans 1 to 35 (MLNRENKTAITRKGMVSNRLNKFSIRKYTVGTASI). The YSIRK-G/S signaling motif motif lies at 23 to 34 (FSIRKYTVGTAS). The ligand binding A region stretch occupies residues 36 to 568 (LVGTTLIFGL…NNQSGGAGQE (533 aa)). The segment at 55–185 (STNKELNEAT…NKKVDAKTES (131 aa)) is disordered. Polar residues-rich tracts occupy residues 62–71 (EATTSASDNQ) and 94–109 (EMVSSQGNETTSNGNK). The segment covering 130-145 (KSDEQASPKSTNEDLN) has biased composition (basic and acidic residues). 2 stretches are compositionally biased toward polar residues: residues 146–155 (TKQTISNQEA) and 163–173 (NKSVVNAQPTN). The span at 174-183 (EENKKVDAKT) shows a compositional bias: basic and acidic residues. 5 consecutive CNA-B domains span residues 569-680 (VYKI…IYKP), 681-791 (KYNL…YKTP), 792-901 (KYNL…FYKP), 902-1012 (TYNL…YKTS), and 1013-1123 (KYSL…EEDT). Disordered stretches follow at residues 857–883 (ETPSGYTPTQVGSGTDEGIDSNGTSTT), 972–992 (YTPTSVTSGNDTEKDSNGLTT), and 1078–1323 (EKPA…SNNA). Composition is skewed to polar residues over residues 860 to 869 (SGYTPTQVGS) and 972 to 981 (YTPTSVTSGN). Composition is skewed to acidic residues over residues 1091–1101 (TEDDKDADGGE) and 1118–1286 (YFEE…DSDS). The short motif at 1310–1314 (LPETG) is the LPXTG sorting signal element. Thr1313 is modified (pentaglycyl murein peptidoglycan amidated threonine). A propeptide spans 1314–1347 (GNENSGSNNATLFGGLFAALGSLLLFGRRKKQNK) (removed by sortase).

It belongs to the serine-aspartate repeat-containing protein (SDr) family. As to quaternary structure, interacts with host DSG1; this interaction increases S.aureus adherence to keratinocytes.

The protein resides in the secreted. It is found in the cell wall. Functionally, cell surface-associated calcium-binding protein which plays an important role in adhesion and pathogenesis. Mediates interactions with components of the extracellular matrix such as host DSG1 to promote bacterial adhesion to host cells. Contributes to the resistance to killing by innate immune components such as neutrophils present in blood and thus attenuates bacterial clearance. This is Serine-aspartate repeat-containing protein D (sdrD) from Staphylococcus aureus (strain MW2).